Here is a 344-residue protein sequence, read N- to C-terminus: MTQSLSYRDAGVDIDAGDQLVENIKPFAKRTMRPEVLGGLGGFGALVEISKKYREPVLVSGTDGVGTKLKLAFDWNRHDTVGIDLVAMSVNDILVQGAEPLFFLDYFACGKLDVAQATDVIKGIAEGCEQAGCALIGGETAEMPGMYPVGEYDLAGFAVGVVEKSQVITGRDIRPGDVVLGLGSNGVHSNGFSLVRKIIERAGPDLDAPFDGDRTLRDAIIAPTRIYVKPLLKLMAGVPVKGMAHITGGGITENTPRVLPDNCVAQIDAASWTLPKLFQWLQQEGNVDAQEMYRTFNCGIGMVVIVAPEQADAATALLTAEGETVHRLGLVRARQGDEHQTQIA.

It belongs to the AIR synthase family.

It localises to the cytoplasm. The enzyme catalyses 2-formamido-N(1)-(5-O-phospho-beta-D-ribosyl)acetamidine + ATP = 5-amino-1-(5-phospho-beta-D-ribosyl)imidazole + ADP + phosphate + H(+). The protein operates within purine metabolism; IMP biosynthesis via de novo pathway; 5-amino-1-(5-phospho-D-ribosyl)imidazole from N(2)-formyl-N(1)-(5-phospho-D-ribosyl)glycinamide: step 2/2. The polypeptide is Phosphoribosylformylglycinamidine cyclo-ligase (Laribacter hongkongensis (strain HLHK9)).